The sequence spans 196 residues: C-type lectin domain family 3 member A (196 aa).

The signal sequence occupies residues 1–22 (MAKNGLVLCILVVSLLLDQTDG). Cystine bridges form between Cys68–Cys78, Cys95–Cys191, and Cys167–Cys183. Residues 74–192 (VHKKCYLASE…CRSSKRYICE (119 aa)) enclose the C-type lectin domain.

It localises to the secreted. In terms of biological role, promotes cell adhesion to laminin and fibronectin. In Mus musculus (Mouse), this protein is C-type lectin domain family 3 member A (Clec3a).